A 1273-amino-acid polypeptide reads, in one-letter code: Probable methionine synthase (1273 aa).

The region spanning 7–327 (FKELADIAKE…DHINAMYKAV (321 aa)) is the Hcy-binding domain. Residues cysteine 249, cysteine 312, and cysteine 313 each contribute to the Zn(2+) site. The region spanning 360–621 (FVNIGERCNV…IDKPLLQLLE (262 aa)) is the Pterin-binding domain. The B12-binding N-terminal domain occupies 652-749 (KTDEWRNTSV…FMDAERQANI (98 aa)). Residues glutamate 699, 772–776 (GDVHD), histidine 775, serine 820, threonine 824, and alanine 876 contribute to the methylcob(III)alamin site. One can recognise a B12-binding domain in the interval 762 to 897 (QGTVVIATVK…DMTVRDAFLQ (136 aa)). Residues 927–1273 (SLKDRRFVAL…LSPIIGYELD (347 aa)) form the AdoMet activation domain. S-adenosyl-L-methionine-binding positions include aspartate 977, arginine 1171, and 1225 to 1226 (YF).

Belongs to the vitamin-B12 dependent methionine synthase family. It depends on methylcob(III)alamin as a cofactor. The cofactor is Zn(2+).

It catalyses the reaction (6S)-5-methyl-5,6,7,8-tetrahydrofolate + L-homocysteine = (6S)-5,6,7,8-tetrahydrofolate + L-methionine. It participates in amino-acid biosynthesis; L-methionine biosynthesis via de novo pathway; L-methionine from L-homocysteine (MetH route): step 1/1. Catalyzes the transfer of a methyl group from methyl-cobalamin to homocysteine, yielding enzyme-bound cob(I)alamin and methionine. Subsequently, remethylates the cofactor using methyltetrahydrofolate. The chain is Probable methionine synthase (metr-1) from Caenorhabditis briggsae.